A 236-amino-acid polypeptide reads, in one-letter code: Probable 2-phosphosulfolactate phosphatase (236 aa).

This sequence belongs to the ComB family. Mg(2+) serves as cofactor.

It catalyses the reaction (2R)-O-phospho-3-sulfolactate + H2O = (2R)-3-sulfolactate + phosphate. The protein is Probable 2-phosphosulfolactate phosphatase of Gloeobacter violaceus (strain ATCC 29082 / PCC 7421).